The primary structure comprises 544 residues: Transcription factor bHLH119 (544 aa).

Disordered stretches follow at residues 12 to 59 (NGQV…QPPR) and 185 to 208 (VASTSATRPQSSASLAPTPPPPSV). Over residues 15 to 29 (VVRTSQPQRPSSGKP) the composition is skewed to polar residues. Over residues 50–59 (LPLPLLQPPR) the composition is skewed to pro residues. Residue Thr269 is modified to Phosphothreonine. A Phosphoserine modification is found at Ser274. 2 disordered regions span residues 342–364 (QGTEEAHGSTSRKRSRAADMHNL) and 522–544 (QPPLPLQGQPTSQPSFSHASTSK). Positions 357–406 (RAADMHNLSERRRRERINERMKTLQELLPRCRKTDKVSMLEDVIEYVKSL) constitute a bHLH domain. A compositionally biased stretch (low complexity) spans 522–535 (QPPLPLQGQPTSQP). 2 positions are modified to phosphoserine: Ser541 and Ser543.

Homodimer.

It is found in the nucleus. In Arabidopsis thaliana (Mouse-ear cress), this protein is Transcription factor bHLH119 (BHLH119).